Here is a 527-residue protein sequence, read N- to C-terminus: Butyrophilin subfamily 2 member A1 (527 aa).

The N-terminal stretch at 1-28 is a signal peptide; sequence MESAAALHFSRPASLLLLLLSLCALVSA. The 113-residue stretch at 29-141 folds into the Ig-like V-type domain; it reads QFIVVGPTDP…SYDEAILHLV (113 aa). At 29 to 248 the chain is on the extracellular side; sequence QFIVVGPTDP…SFMPSVSPCA (220 aa). Asparagine 46, asparagine 114, and asparagine 120 each carry an N-linked (GlcNAc...) asparagine glycan. A disulfide bond links cysteine 51 and cysteine 125. The chain crosses the membrane as a helical span at residues 249 to 269; that stretch reads VALPIIVVILMIPIAVCIYWI. Topologically, residues 270–527 are cytoplasmic; sequence NKLQKEKKIL…LHRVGTHQSL (258 aa). Positions 310–506 constitute a B30.2/SPRY domain; the sequence is VKEKLQEELR…IFICPALTGA (197 aa).

It belongs to the immunoglobulin superfamily. BTN/MOG family. Highly expressed in brain, bone marrow, small intestine, muscle, spleen and pancreas. Moderate expression was seen in lung, liver and kidney.

Its subcellular location is the membrane. The protein is Butyrophilin subfamily 2 member A1 (BTN2A1) of Homo sapiens (Human).